The primary structure comprises 1468 residues: DNA polymerase alpha catalytic subunit A (1468 aa).

The segment covering 1 to 12 (MSSKSEKLEKLR) has biased composition (basic and acidic residues). Disordered stretches follow at residues 1–34 (MSSK…SDGD), 71–135 (GVEE…KKSI), and 166–205 (NLNS…PDSS). Ser-2 carries the N-acetylserine modification. Ser-31 is modified (phosphoserine). A compositionally biased stretch (basic and acidic residues) spans 71–80 (GVEEDWREVD). Phosphoserine is present on residues Ser-82, Ser-83, Ser-84, Ser-169, and Ser-170. Residues 166-176 (NLNSSPTSEFK) are compositionally biased toward polar residues. Thr-172 is subject to Phosphothreonine. Positions 183–205 (NGNDESSHDAGISKKVKIDPDSS) are enriched in basic and acidic residues. Ser-240 and Ser-274 each carry phosphoserine. A disordered region spans residues 256 to 275 (LANPPSAQSLADEEDDEDSD). Acidic residues predominate over residues 266-275 (ADEEDDEDSD). Phosphothreonine is present on residues Thr-309 and Thr-313. Residues 813-837 (PDKEGNRSRAQKQRQNEENADAPVN) are disordered. Residues 1246-1381 (KKYFRREGGN…CTGVMRYKYS (136 aa)) form a DNA-binding region. 8 residues coordinate Zn(2+): Cys-1287, Cys-1290, Cys-1314, Cys-1317, Cys-1348, Cys-1353, Cys-1367, and Cys-1372. A CysA-type zinc finger spans residues 1287–1317 (CPSCDKRFPFGGIVSSNYYRVSYNGLQCKHC). The CysB motif signature appears at 1348–1372 (CDDSTCGIVTRQVSVFGKRCLNDGC).

This sequence belongs to the DNA polymerase type-B family. As to quaternary structure, DNA polymerase alpha:primase is a four subunit enzyme complex, which is assembled throughout the cell cycle, and consists of the two DNA polymerase subunits A POL1 and B POL12, and the DNA primase large PRI2 and small PRI1 subunits. Subunit B POL12 binds to subunit A POL1. POL1 interacts with CDC13, POB3, SPT16 and MCM10.

It localises to the nucleus. The catalysed reaction is DNA(n) + a 2'-deoxyribonucleoside 5'-triphosphate = DNA(n+1) + diphosphate. Functionally, catalytic component of DNA polymerase alpha, which in complex with DNA primase (DNA polymerase alpha:primase) constitutes a replicative polymerase. POL1 has a role in promoting telomere replication during interaction with CDC13. The polypeptide is DNA polymerase alpha catalytic subunit A (POL1) (Saccharomyces cerevisiae (strain ATCC 204508 / S288c) (Baker's yeast)).